A 453-amino-acid chain; its full sequence is Glutamyl-tRNA reductase (453 aa).

Substrate contacts are provided by residues 49 to 52 (TCNR), Ser109, 114 to 116 (EQQ), and Gln120. The active-site Nucleophile is Cys50. 191-196 (GAGSMG) lines the NADP(+) pocket. Residues 432-453 (PAAVATPTDLVDGDRTGRDLQA) are disordered. The segment covering 443–453 (DGDRTGRDLQA) has biased composition (basic and acidic residues).

This sequence belongs to the glutamyl-tRNA reductase family. Homodimer.

It carries out the reaction (S)-4-amino-5-oxopentanoate + tRNA(Glu) + NADP(+) = L-glutamyl-tRNA(Glu) + NADPH + H(+). Its pathway is porphyrin-containing compound metabolism; protoporphyrin-IX biosynthesis; 5-aminolevulinate from L-glutamyl-tRNA(Glu): step 1/2. Catalyzes the NADPH-dependent reduction of glutamyl-tRNA(Glu) to glutamate 1-semialdehyde (GSA). The protein is Glutamyl-tRNA reductase of Rhodococcus erythropolis (strain PR4 / NBRC 100887).